The primary structure comprises 439 residues: Xylose isomerase (439 aa).

Residues histidine 101 and aspartate 104 contribute to the active site. Positions 232, 268, 271, 296, 307, 309, and 339 each coordinate Mg(2+).

It belongs to the xylose isomerase family. As to quaternary structure, homotetramer. Mg(2+) serves as cofactor.

The protein localises to the cytoplasm. The enzyme catalyses alpha-D-xylose = alpha-D-xylulofuranose. The polypeptide is Xylose isomerase (Haemophilus influenzae (strain PittEE)).